The chain runs to 688 residues: Lipase (688 aa).

Residues 1–35 (MKTRQNKYSIRKFSVGASSILIAALLFMGGGSAQA) form the signal peptide. The interval 31-309 (GSAQAAEQQQ…KSAKQKQYKN (279 aa)) is disordered. Positions 36–302 (AEQQQDKGTV…KNEDQTNKSA (267 aa)) are cleaved as a propeptide — removed in mature form. Residues 45–54 (VENSTTQSIG) show a composition bias toward polar residues. Positions 68-79 (NKNVNEKSNVNS) are enriched in low complexity. 2 stretches are compositionally biased toward basic and acidic residues: residues 84–95 (ESLHNETPKNED) and 103–143 (SQND…KHAS). The span at 144 to 172 (ENNQTLHSKAAQSNEDVKTKPSQLDNTAA) shows a compositional bias: polar residues. The segment covering 173–183 (KQEDSQKENLS) has biased composition (basic and acidic residues). Over residues 184–211 (KQDTQSSKTTDLLRATAQNQSKDSQSTE) the composition is skewed to polar residues. The span at 240–267 (SKEEPLKVDKQANPTTDKDKSSKNDKGS) shows a compositional bias: basic and acidic residues. Over residues 274–289 (LESNAVATTNKQSKQQ) the composition is skewed to polar residues. Residue S418 is the Nucleophile of the active site. D609 acts as the Charge relay system in catalysis. D647 is a binding site for Ca(2+). The active-site Charge relay system is the H648. Positions 650, 655, and 658 each coordinate Ca(2+).

The protein belongs to the AB hydrolase superfamily. Lipase family.

The protein resides in the secreted. It carries out the reaction a triacylglycerol + H2O = a diacylglycerol + a fatty acid + H(+). The polypeptide is Lipase (lip) (Staphylococcus epidermidis (strain ATCC 12228 / FDA PCI 1200)).